Consider the following 138-residue polypeptide: Translation initiation factor 2 subunit beta (138 aa).

It belongs to the eIF-2-beta/eIF-5 family. Heterotrimer composed of an alpha, a beta and a gamma chain.

EIF-2 functions in the early steps of protein synthesis by forming a ternary complex with GTP and initiator tRNA. The polypeptide is Translation initiation factor 2 subunit beta (Methanococcus vannielii (strain ATCC 35089 / DSM 1224 / JCM 13029 / OCM 148 / SB)).